We begin with the raw amino-acid sequence, 200 residues long: Large ribosomal subunit protein bL25 (200 aa).

It belongs to the bacterial ribosomal protein bL25 family. CTC subfamily. As to quaternary structure, part of the 50S ribosomal subunit; part of the 5S rRNA/L5/L18/L25 subcomplex. Contacts the 5S rRNA. Binds to the 5S rRNA independently of L5 and L18.

Its function is as follows. This is one of the proteins that binds to the 5S RNA in the ribosome where it forms part of the central protuberance. The chain is Large ribosomal subunit protein bL25 from Pseudomonas fluorescens (strain SBW25).